Reading from the N-terminus, the 127-residue chain is Glycine cleavage system H protein 1 (127 aa).

In terms of domain architecture, Lipoyl-binding spans Ser20 to Ile101. Residue Lys60 is modified to N6-lipoyllysine.

It belongs to the GcvH family. The glycine cleavage system is composed of four proteins: P, T, L and H. (R)-lipoate serves as cofactor.

The glycine cleavage system catalyzes the degradation of glycine. The H protein shuttles the methylamine group of glycine from the P protein to the T protein. The sequence is that of Glycine cleavage system H protein 1 from Pseudomonas syringae pv. tomato (strain ATCC BAA-871 / DC3000).